Reading from the N-terminus, the 508-residue chain is DNA-directed RNA polymerase subunit alpha (508 aa).

The tract at residues 1–380 is alpha N-terminal domain (alpha-NTD); the sequence is MKHILLSCVE…HLFSPFLQTH (380 aa). Positions 434 to 508 are alpha C-terminal domain (alpha-CTD); that stretch reads NLVTAIQTLD…LKNFGVLPTS (75 aa).

It belongs to the RNA polymerase alpha chain family. In plastids the minimal PEP RNA polymerase catalytic core is composed of four subunits: alpha, beta, beta', and beta''. When a (nuclear-encoded) sigma factor is associated with the core the holoenzyme is formed, which can initiate transcription.

It localises to the plastid. The protein resides in the chloroplast. The catalysed reaction is RNA(n) + a ribonucleoside 5'-triphosphate = RNA(n+1) + diphosphate. In terms of biological role, DNA-dependent RNA polymerase catalyzes the transcription of DNA into RNA using the four ribonucleoside triphosphates as substrates. In Oltmannsiellopsis viridis (Marine flagellate), this protein is DNA-directed RNA polymerase subunit alpha (rpoA).